We begin with the raw amino-acid sequence, 155 residues long: Small ribosomal subunit protein uS7c (155 aa).

This sequence belongs to the universal ribosomal protein uS7 family. Part of the 30S ribosomal subunit.

It localises to the plastid. The protein resides in the chloroplast. Functionally, one of the primary rRNA binding proteins, it binds directly to 16S rRNA where it nucleates assembly of the head domain of the 30S subunit. This chain is Small ribosomal subunit protein uS7c (rps7), found in Yucca glauca (Soapweed yucca).